Reading from the N-terminus, the 133-residue chain is MSGSMEGNAVSFKGGVFSPYLTTRLPAWAGVRQNVMGSNVDGRPVAPANSATLTYATVGSSVDTAAAAAASAAASTARGMAADFGLYNQLAASRSLREEDALSVVLTRMEELSQQLQDLFAKVALLNPPANAS.

The stretch at 97–127 (REEDALSVVLTRMEELSQQLQDLFAKVALLN) forms a coiled coil.

This sequence belongs to the adenoviridae hexon-interlacing protein family. As to quaternary structure, homotrimer. Interacts with hexon protein; this interaction tethers the hexons together. Self-interacts with adjacent proteins. Interacts with kinesin light chain KLC1; this interaction leads to capsid disruption at the nuclear pore complex during virus entry into host cell.

It is found in the virion. Its subcellular location is the host nucleus. Its function is as follows. Structural component of the virion that acts as a cement protein on the capsid exterior and forms triskelion structures consisting of three molecules that stabilize three hexon trimers at the center of each icosahedral facet and fixes the peripentonal hexons. Dispensable for assembly. During virus entry, recruits the anterograde motor kinesin-1 to the capsid docked at the nuclear pore complex thereby subjecting the docked capsid to a pulling force. The resulting tension leads to capsid disruption, dispersion of capsid fragments toward cell periphery and eventually viral DNA entry into the host nucleus. In Homo sapiens (Human), this protein is Hexon-interlacing protein.